Reading from the N-terminus, the 149-residue chain is L-alanine exporter AlaE (149 aa).

4 consecutive transmembrane segments (helical) span residues 17-37 (FAMV…ISGM), 43-63 (LASR…YGVF), 86-106 (LTAY…TVGA), and 111-131 (IITA…FYGY).

The protein belongs to the AlaE exporter family.

It localises to the cell inner membrane. In terms of biological role, exports L-alanine. This Aliivibrio salmonicida (strain LFI1238) (Vibrio salmonicida (strain LFI1238)) protein is L-alanine exporter AlaE.